The chain runs to 449 residues: Gamma-aminobutyric acid receptor subunit delta (449 aa).

The N-terminal stretch at 1–24 (MDVLGWLLLPLLLLCTQPHHGARA) is a signal peptide. The Extracellular portion of the chain corresponds to 25 to 251 (MNDIGDYVGS…QLRRNRGVYI (227 aa)). N103 and N106 each carry an N-linked (GlcNAc...) asparagine glycan. C164 and C178 are oxidised to a cystine. A helical membrane pass occupies residues 252–271 (IQSYMPSVLLVAMSWVSFWI). The Cytoplasmic portion of the chain corresponds to 272–275 (SQAA). Residues 276–298 (VPARVSLGITTVLTMTTLMVSAR) traverse the membrane as a helical segment. The Extracellular portion of the chain corresponds to 299 to 308 (SSLPRASAIK). The helical transmembrane segment at 309–331 (ALDVYFWICYVFVFAALVEYAFA) threads the bilayer. The Cytoplasmic portion of the chain corresponds to 332-423 (HFNADYRKKR…SRLKPIDADT (92 aa)). S390 is subject to Phosphoserine. The helical transmembrane segment at 424–446 (IDIYARAVFPAAFAAVNIIYWAA) threads the bilayer. The Extracellular segment spans residues 447-449 (YTM).

It belongs to the ligand-gated ion channel (TC 1.A.9) family. Gamma-aminobutyric acid receptor (TC 1.A.9.5) subfamily. GABRD sub-subfamily. As to quaternary structure, heteropentamer, formed by a combination of alpha (GABRA1-6), beta (GABRB1-3), gamma (GABRG1-3), delta (GABRD), epsilon (GABRE), rho (GABRR1-3), pi (GABRP) and theta (GABRQ) chains, each subunit exhibiting distinct physiological and pharmacological properties. As to expression, found in the brain, in cerebellar granule cells. Expressed in lungs, in alveolar epithelium.

It localises to the cell membrane. It carries out the reaction chloride(in) = chloride(out). Functionally, delta subunit of the heteropentameric ligand-gated chloride channel gated by gamma-aminobutyric acid (GABA), a major inhibitory neurotransmitter in the brain. GABA-gated chloride channels, also named GABA(A) receptors (GABAAR), consist of five subunits arranged around a central pore and contain GABA active binding site(s) located at the alpha and beta subunit interface(s). When activated by GABA, GABAARs selectively allow the flow of chloride anions across the cell membrane down their electrochemical gradient. GABAARs containing delta/GABRD subunits are predominantly expressed and located in extrasynaptic or perisynaptic positions on hippocampus and cerebellar granule cells, and contribute to the tonic GABAergic inhibition. GABAAR containing alpha-4-beta-3-delta subunits can simultaneously bind GABA and histamine where histamine binds at the interface of two neighboring beta subunits, which may be involved in the regulation of sleep and wakefulness. The chain is Gamma-aminobutyric acid receptor subunit delta from Rattus norvegicus (Rat).